Consider the following 211-residue polypeptide: Thiamine-phosphate synthase (211 aa).

4-amino-2-methyl-5-(diphosphooxymethyl)pyrimidine is bound by residues 37 to 41 and Asn69; that span reads QLRIK. Asp70 and Asp89 together coordinate Mg(2+). A 4-amino-2-methyl-5-(diphosphooxymethyl)pyrimidine-binding site is contributed by Ser108. Residue 134–136 participates in 2-[(2R,5Z)-2-carboxy-4-methylthiazol-5(2H)-ylidene]ethyl phosphate binding; that stretch reads TQT. Lys137 contacts 4-amino-2-methyl-5-(diphosphooxymethyl)pyrimidine. Residues Gly166 and 186 to 187 each bind 2-[(2R,5Z)-2-carboxy-4-methylthiazol-5(2H)-ylidene]ethyl phosphate; that span reads VS.

It belongs to the thiamine-phosphate synthase family. Requires Mg(2+) as cofactor.

It carries out the reaction 2-[(2R,5Z)-2-carboxy-4-methylthiazol-5(2H)-ylidene]ethyl phosphate + 4-amino-2-methyl-5-(diphosphooxymethyl)pyrimidine + 2 H(+) = thiamine phosphate + CO2 + diphosphate. The enzyme catalyses 2-(2-carboxy-4-methylthiazol-5-yl)ethyl phosphate + 4-amino-2-methyl-5-(diphosphooxymethyl)pyrimidine + 2 H(+) = thiamine phosphate + CO2 + diphosphate. The catalysed reaction is 4-methyl-5-(2-phosphooxyethyl)-thiazole + 4-amino-2-methyl-5-(diphosphooxymethyl)pyrimidine + H(+) = thiamine phosphate + diphosphate. It participates in cofactor biosynthesis; thiamine diphosphate biosynthesis; thiamine phosphate from 4-amino-2-methyl-5-diphosphomethylpyrimidine and 4-methyl-5-(2-phosphoethyl)-thiazole: step 1/1. Its function is as follows. Condenses 4-methyl-5-(beta-hydroxyethyl)thiazole monophosphate (THZ-P) and 2-methyl-4-amino-5-hydroxymethyl pyrimidine pyrophosphate (HMP-PP) to form thiamine monophosphate (TMP). In Citrobacter koseri (strain ATCC BAA-895 / CDC 4225-83 / SGSC4696), this protein is Thiamine-phosphate synthase.